A 362-amino-acid chain; its full sequence is B3 domain-containing protein IDEF1 (362 aa).

Residues 30-91 (VPFPNPFPAP…TPTPTPRGFA (62 aa)) are disordered. Over residues 48–70 (PHNHNHNHNHNHNIHNSHNHNHN) the composition is skewed to basic residues. The segment at residues 253 to 355 (LRKELTKSDV…KFIIRGEKAI (103 aa)) is a DNA-binding region (TF-B3).

Post-translationally, polyubiquitinated. Ubiquitination leads to its subsequent degradation via the proteasome pathway. In terms of tissue distribution, expressed in roots.

It localises to the nucleus. Functionally, transcription regulator involved in iron deficiency response and tolerance. May regulate directly iron transporters or other transcription factors involved in iron-deficiency response. Binds specifically to the DNA sequence 5'-CATGC-3' of the IDE1 element found in the promoter of the barley iron deficiency-inducible gene IDS2. The polypeptide is B3 domain-containing protein IDEF1 (IDEF1) (Oryza sativa subsp. japonica (Rice)).